The primary structure comprises 335 residues: Ferrochelatase (335 aa).

Residues His-207 and Glu-288 each contribute to the Fe cation site.

It belongs to the ferrochelatase family.

Its subcellular location is the cytoplasm. It carries out the reaction heme b + 2 H(+) = protoporphyrin IX + Fe(2+). Its pathway is porphyrin-containing compound metabolism; protoheme biosynthesis; protoheme from protoporphyrin-IX: step 1/1. Catalyzes the ferrous insertion into protoporphyrin IX. This Helicobacter pylori (strain HPAG1) protein is Ferrochelatase.